A 200-amino-acid chain; its full sequence is Transcription elongation factor A protein-like 5 (200 aa).

5 stretches are compositionally biased toward basic and acidic residues: residues M1–V49, G61–S85, R94–P106, D114–R153, and G190–V200. A disordered region spans residues M1–V200.

It belongs to the TFS-II family. TFA subfamily.

It localises to the nucleus. Its function is as follows. May be involved in transcriptional regulation. The sequence is that of Transcription elongation factor A protein-like 5 (Tceal5) from Mus musculus (Mouse).